A 444-amino-acid chain; its full sequence is Phosphoglucosamine mutase (444 aa).

The Phosphoserine intermediate role is filled by serine 104. Mg(2+)-binding residues include serine 104, aspartate 243, aspartate 245, and aspartate 247. Serine 104 is subject to Phosphoserine.

The protein belongs to the phosphohexose mutase family. Mg(2+) serves as cofactor. Post-translationally, activated by phosphorylation.

It catalyses the reaction alpha-D-glucosamine 1-phosphate = D-glucosamine 6-phosphate. Its function is as follows. Catalyzes the conversion of glucosamine-6-phosphate to glucosamine-1-phosphate. The protein is Phosphoglucosamine mutase of Neisseria meningitidis serogroup A / serotype 4A (strain DSM 15465 / Z2491).